Here is a 308-residue protein sequence, read N- to C-terminus: Transcription factor JunB (308 aa).

A basic motif region spans residues 229–256 (RIKAERKRLRNRLAATKCRKRKLERISR). One can recognise a bZIP domain in the interval 229 to 292 (RIKAERKRLR…AQLKQKVLRH (64 aa)). The leucine-zipper stretch occupies residues 257-285 (LEEKVKVLKNDNAGLSNTASVLRDQVAQL).

Belongs to the bZIP family. Jun subfamily. In terms of assembly, binds DNA as a homodimer or as a heterodimer with another member of the jun/fos family.

Its subcellular location is the nucleus. Its function is as follows. Transcription factor involved in regulating gene activity following the primary growth factor response. Binds to the DNA sequence 5'-TGA[CG]TCA-3'. The chain is Transcription factor JunB (junb) from Cyprinus carpio (Common carp).